A 191-amino-acid chain; its full sequence is COP9 signalosome complex subunit 8 (191 aa).

Residues 6-179 form the PCI domain; the sequence is MMAELDEKLL…VSLVPNEQQL (174 aa).

The protein belongs to the CSN8 family. As to quaternary structure, component of the CSN complex, probably composed of cops1, cops2, cops3, cops4, cops5, cops6, cops7, cops8 and cops9.

Its subcellular location is the cytoplasm. It is found in the nucleus. Component of the COP9 signalosome complex (CSN), a complex involved in various cellular and developmental processes. The CSN complex is an essential regulator of the ubiquitin (Ubl) conjugation pathway by mediating the deneddylation of the cullin subunits of E3 ligase complexes, leading to modify the Ubl ligase activity. The sequence is that of COP9 signalosome complex subunit 8 (cops8) from Danio rerio (Zebrafish).